A 434-amino-acid chain; its full sequence is Putative magnesium transporter MRS2-D (434 aa).

Disordered stretches follow at residues 126–171 (AASP…DGEA) and 279–311 (EASELEDHSSRDEEGVEGGGGGDGDDETIAGGG). Residues 279 to 291 (EASELEDHSSRDE) are compositionally biased toward basic and acidic residues. The next 2 helical transmembrane spans lie at 367–387 (GILLSTGTLVSSCAIAVTGVF) and 405–425 (FPCAAAGIVAGSLALYLAALL).

Belongs to the CorA metal ion transporter (MIT) (TC 1.A.35.5) family.

It localises to the membrane. In terms of biological role, putative magnesium transporter. The sequence is that of Putative magnesium transporter MRS2-D (MRS2-D) from Oryza sativa subsp. japonica (Rice).